The sequence spans 210 residues: MATTFSLPPLPYAYDALEPVICKQIMEIHHQKHHQTYITNLNAALSAQSTALAANNIPQLINLQQKIKFNGGGHINHSLFWKNLAPHASPETNIDQAAPVLKAAIEAQYGSVEKFKEAFGATLLGLQGSGWGWLVANGPGGKLEIVSTKDQDPVTDKVPVFGVDMWEHAYYLQYFNNKASYVEGIWKVLNWRTAEDRFKNGVEGSALLKL.

4 residues coordinate Mn(2+): histidine 29, histidine 77, aspartate 164, and histidine 168.

The protein belongs to the iron/manganese superoxide dismutase family. Homotetramer. The cofactor is Mn(2+).

Its subcellular location is the mitochondrion matrix. The catalysed reaction is 2 superoxide + 2 H(+) = H2O2 + O2. Functionally, destroys superoxide anion radicals which are normally produced within the cells and which are toxic to biological systems. The protein is Superoxide dismutase [Mn], mitochondrial (sodB) of Aspergillus oryzae (strain ATCC 42149 / RIB 40) (Yellow koji mold).